Here is a 151-residue protein sequence, read N- to C-terminus: Large ribosomal subunit protein bL9 (151 aa).

The protein belongs to the bacterial ribosomal protein bL9 family.

In terms of biological role, binds to the 23S rRNA. In Thermosipho melanesiensis (strain DSM 12029 / CIP 104789 / BI429), this protein is Large ribosomal subunit protein bL9.